Here is a 117-residue protein sequence, read N- to C-terminus: MDKKAARIRRATRARRKLQELGATRLVVHRTPRHIYAQVIAPNGSEVLVAASTVEKAIAEQLKSTGNKDAATAIGKAIAERALEKGIKNVSFDRSGFQYHGRVQALADAAREAGLQF.

The protein belongs to the universal ribosomal protein uL18 family. In terms of assembly, part of the 50S ribosomal subunit; part of the 5S rRNA/L5/L18/L25 subcomplex. Contacts the 5S and 23S rRNAs.

Its function is as follows. This is one of the proteins that bind and probably mediate the attachment of the 5S RNA into the large ribosomal subunit, where it forms part of the central protuberance. In Pectobacterium atrosepticum (strain SCRI 1043 / ATCC BAA-672) (Erwinia carotovora subsp. atroseptica), this protein is Large ribosomal subunit protein uL18.